A 300-amino-acid polypeptide reads, in one-letter code: uncharacterized protein (300 aa).

Positions 1–11 are enriched in polar residues; that stretch reads MYNEGVTSPSQ. Residues 1-20 form a disordered region; that stretch reads MYNEGVTSPSQLARKKNATD. Positions 1 to 92 form a DNA-binding region, recombinase; it reads MYNEGVTSPS…QEILITRKRR (92 aa). Residues 162–249 adopt a coiled-coil conformation; it reads SKENYFKELS…DLEFQKIEKE (88 aa).

This is an uncharacterized protein from Bacillus subtilis (strain 168).